A 251-amino-acid chain; its full sequence is tRNA-cytidine(32) 2-sulfurtransferase 2 (251 aa).

The short motif at 33–38 is the PP-loop motif element; that stretch reads SGGKDS. Cysteine 108, cysteine 111, and cysteine 199 together coordinate [4Fe-4S] cluster.

Belongs to the TtcA family. Homodimer. It depends on Mg(2+) as a cofactor. [4Fe-4S] cluster is required as a cofactor.

The protein localises to the cytoplasm. The enzyme catalyses cytidine(32) in tRNA + S-sulfanyl-L-cysteinyl-[cysteine desulfurase] + AH2 + ATP = 2-thiocytidine(32) in tRNA + L-cysteinyl-[cysteine desulfurase] + A + AMP + diphosphate + H(+). The protein operates within tRNA modification. Catalyzes the ATP-dependent 2-thiolation of cytidine in position 32 of tRNA, to form 2-thiocytidine (s(2)C32). The sulfur atoms are provided by the cysteine/cysteine desulfurase (IscS) system. The polypeptide is tRNA-cytidine(32) 2-sulfurtransferase 2 (Francisella tularensis subsp. tularensis (strain FSC 198)).